The sequence spans 637 residues: ATP-dependent RNA helicase DBP6 (637 aa).

The tract at residues 1 to 93 (MFAVRFDPSQ…AASDHPDKHN (93 aa)) is disordered. The segment covering 33-84 (DEEDESSEEETESSEDEEEKEKEEVADEDSMDVDDESSGDDDEEAEEGEVDA) has biased composition (acidic residues). The short motif at 198 to 206 (TFPIQSILL) is the Q motif element. In terms of domain architecture, Helicase ATP-binding spans 222–402 (KNFTRRVGDV…GLQFYNPKLF (181 aa)). 235–242 (ASTGSGKT) contacts ATP. Residues 342 to 345 (DEAD) carry the DEAD box motif. The region spanning 434–608 (FLLRLLSEIN…EGQEEEAQVL (175 aa)) is the Helicase C-terminal domain.

Belongs to the DEAD box helicase family. DDX51/DBP6 subfamily. Associated with pre-ribosomal particles.

The protein resides in the nucleus. It localises to the nucleolus. The enzyme catalyses ATP + H2O = ADP + phosphate + H(+). Its function is as follows. ATP-binding RNA helicase involved in the biogenesis of 60S ribosomal subunits and is required for the normal formation of 25S and 5.8S rRNAs. This is ATP-dependent RNA helicase DBP6 (DBP6) from Vanderwaltozyma polyspora (strain ATCC 22028 / DSM 70294 / BCRC 21397 / CBS 2163 / NBRC 10782 / NRRL Y-8283 / UCD 57-17) (Kluyveromyces polysporus).